We begin with the raw amino-acid sequence, 423 residues long: Kynureninase (423 aa).

Pyridoxal 5'-phosphate contacts are provided by residues Leu-105, Ser-106, 133 to 136, Asp-218, His-221, and Tyr-243; that span reads FPSD. Lys-244 is modified (N6-(pyridoxal phosphate)lysine). Pyridoxal 5'-phosphate contacts are provided by Trp-273 and Asn-301.

The protein belongs to the kynureninase family. As to quaternary structure, homodimer. It depends on pyridoxal 5'-phosphate as a cofactor.

The catalysed reaction is L-kynurenine + H2O = anthranilate + L-alanine + H(+). It catalyses the reaction 3-hydroxy-L-kynurenine + H2O = 3-hydroxyanthranilate + L-alanine + H(+). Its pathway is amino-acid degradation; L-kynurenine degradation; L-alanine and anthranilate from L-kynurenine: step 1/1. The protein operates within cofactor biosynthesis; NAD(+) biosynthesis; quinolinate from L-kynurenine: step 2/3. Its function is as follows. Catalyzes the cleavage of L-kynurenine (L-Kyn) and L-3-hydroxykynurenine (L-3OHKyn) into anthranilic acid (AA) and 3-hydroxyanthranilic acid (3-OHAA), respectively. The polypeptide is Kynureninase (Xanthomonas oryzae pv. oryzae (strain KACC10331 / KXO85)).